The primary structure comprises 151 residues: Ribosome maturation factor RimP (151 aa).

The protein belongs to the RimP family.

The protein localises to the cytoplasm. Functionally, required for maturation of 30S ribosomal subunits. In Shewanella sediminis (strain HAW-EB3), this protein is Ribosome maturation factor RimP.